Here is a 145-residue protein sequence, read N- to C-terminus: Allergen Sin a 1 (145 aa).

The interval 34–62 is disordered; the sequence is SGSGPSWTLDDEFDFEDDMENPQGPQQRP. A propeptide spanning residues 40–54 is cleaved from the precursor; the sequence is WTLDDEFDFEDDMEN. Positions 42–53 are enriched in acidic residues; sequence LDDEFDFEDDME.

It belongs to the 2S seed storage albumins family. In terms of assembly, the protein consists of two chains linked by disulfide bonds.

This is a 2S seed storage protein. The protein is Allergen Sin a 1 of Sinapis alba (White mustard).